A 119-amino-acid chain; its full sequence is UPF0231 protein YPTB0717 (119 aa).

It belongs to the UPF0231 family.

The sequence is that of UPF0231 protein YPTB0717 from Yersinia pseudotuberculosis serotype I (strain IP32953).